The following is a 304-amino-acid chain: NADH-cytochrome b5 reductase 2 (304 aa).

A helical membrane pass occupies residues Gly-6–Leu-26. Residues Gln-43–Lys-155 enclose the FAD-binding FR-type domain. Residues Asp-135–Asp-165 and Phe-174–Leu-209 each bind FAD.

The protein belongs to the flavoprotein pyridine nucleotide cytochrome reductase family. Requires FAD as cofactor.

Its subcellular location is the membrane. The enzyme catalyses 2 Fe(III)-[cytochrome b5] + NADH = 2 Fe(II)-[cytochrome b5] + NAD(+) + H(+). Its function is as follows. NADH-cytochrome b5 reductases are involved in desaturation and elongation of fatty acids, cholesterol biosynthesis and drug metabolism. The protein is NADH-cytochrome b5 reductase 2 (CYB5R2) of Gallus gallus (Chicken).